The sequence spans 179 residues: ATP synthase subunit delta (179 aa).

Belongs to the ATPase delta chain family. F-type ATPases have 2 components, F(1) - the catalytic core - and F(0) - the membrane proton channel. F(1) has five subunits: alpha(3), beta(3), gamma(1), delta(1), epsilon(1). F(0) has three main subunits: a(1), b(2) and c(10-14). The alpha and beta chains form an alternating ring which encloses part of the gamma chain. F(1) is attached to F(0) by a central stalk formed by the gamma and epsilon chains, while a peripheral stalk is formed by the delta and b chains.

The protein resides in the cell membrane. Functionally, f(1)F(0) ATP synthase produces ATP from ADP in the presence of a proton or sodium gradient. F-type ATPases consist of two structural domains, F(1) containing the extramembraneous catalytic core and F(0) containing the membrane proton channel, linked together by a central stalk and a peripheral stalk. During catalysis, ATP synthesis in the catalytic domain of F(1) is coupled via a rotary mechanism of the central stalk subunits to proton translocation. In terms of biological role, this protein is part of the stalk that links CF(0) to CF(1). It either transmits conformational changes from CF(0) to CF(1) or is implicated in proton conduction. The sequence is that of ATP synthase subunit delta from Clostridium perfringens (strain ATCC 13124 / DSM 756 / JCM 1290 / NCIMB 6125 / NCTC 8237 / Type A).